The following is a 307-amino-acid chain: Voltage-dependent anion channel-forming protein alr2987 (307 aa).

The next 4 helical transmembrane spans lie at 19–39 (VIGA…LVTL), 47–67 (VSQP…LLVF), 209–229 (PLAY…LLPF), and 238–258 (WTGL…AIGL).

This sequence belongs to the anion channel-forming bestrophin (TC 1.A.46) family.

Its subcellular location is the cell membrane. The chain is Voltage-dependent anion channel-forming protein alr2987 from Nostoc sp. (strain PCC 7120 / SAG 25.82 / UTEX 2576).